The primary structure comprises 484 residues: 3-isopropylmalate dehydratase large subunit (484 aa).

3 residues coordinate [4Fe-4S] cluster: Cys352, Cys412, and Cys415. The interval 463-484 (TLSSPSDLDPAPASAAIRTDAA) is disordered. A compositionally biased stretch (low complexity) spans 464-478 (LSSPSDLDPAPASAA).

This sequence belongs to the aconitase/IPM isomerase family. LeuC type 1 subfamily. Heterodimer of LeuC and LeuD. It depends on [4Fe-4S] cluster as a cofactor.

It carries out the reaction (2R,3S)-3-isopropylmalate = (2S)-2-isopropylmalate. It participates in amino-acid biosynthesis; L-leucine biosynthesis; L-leucine from 3-methyl-2-oxobutanoate: step 2/4. In terms of biological role, catalyzes the isomerization between 2-isopropylmalate and 3-isopropylmalate, via the formation of 2-isopropylmaleate. This Pseudarthrobacter chlorophenolicus (strain ATCC 700700 / DSM 12829 / CIP 107037 / JCM 12360 / KCTC 9906 / NCIMB 13794 / A6) (Arthrobacter chlorophenolicus) protein is 3-isopropylmalate dehydratase large subunit.